The sequence spans 304 residues: Ribosomal protein L11 methyltransferase (304 aa).

Residues threonine 147, glycine 168, aspartate 190, and asparagine 238 each coordinate S-adenosyl-L-methionine.

This sequence belongs to the methyltransferase superfamily. PrmA family.

It localises to the cytoplasm. It carries out the reaction L-lysyl-[protein] + 3 S-adenosyl-L-methionine = N(6),N(6),N(6)-trimethyl-L-lysyl-[protein] + 3 S-adenosyl-L-homocysteine + 3 H(+). In terms of biological role, methylates ribosomal protein L11. This Prochlorococcus marinus (strain SARG / CCMP1375 / SS120) protein is Ribosomal protein L11 methyltransferase.